The following is a 190-amino-acid chain: Dual specificity protein phosphatase 21 (190 aa).

The Tyrosine-protein phosphatase domain occupies 21–162; sequence SFSQITRSLF…LINYEFKLFN (142 aa). The sufficient for mitochondrial localization stretch occupies residues 43–128; that stretch reads LSSNRITAIV…AYLMKYHSMS (86 aa). C106 acts as the Phosphocysteine intermediate in catalysis.

The protein belongs to the protein-tyrosine phosphatase family. Non-receptor class dual specificity subfamily. As to quaternary structure, microtubule inner protein component of sperm flagellar doublet microtubules. In terms of tissue distribution, expressed in testis.

The protein localises to the cytoplasm. It localises to the nucleus. Its subcellular location is the mitochondrion inner membrane. It is found in the cytoskeleton. The protein resides in the flagellum axoneme. The catalysed reaction is O-phospho-L-tyrosyl-[protein] + H2O = L-tyrosyl-[protein] + phosphate. It carries out the reaction O-phospho-L-seryl-[protein] + H2O = L-seryl-[protein] + phosphate. The enzyme catalyses O-phospho-L-threonyl-[protein] + H2O = L-threonyl-[protein] + phosphate. Its function is as follows. Protein phosphatase component of the sperm flagellar doublet microtubules. May act as a regulator of sperm motility by mediating dephosphorylation of sperm doublet microtubule proteins. Can dephosphorylate single and diphosphorylated synthetic MAPK peptides, with preference for the phosphotyrosine and diphosphorylated forms over phosphothreonine. The sequence is that of Dual specificity protein phosphatase 21 (DUSP21) from Homo sapiens (Human).